A 300-amino-acid polypeptide reads, in one-letter code: ADP,ATP carrier protein 2 (300 aa).

3 Solcar repeats span residues 8 to 100 (VAFI…YKQV), 113 to 203 (RYFI…ARGM), and 214 to 299 (VSWA…IKKV). A run of 5 helical transmembrane segments spans residues 10-39 (FIKDFAAGGISAAISKTAVAPIERVKLLLQ), 77-101 (LANVIRYFPTQALNFAFKDKYKQVF), 112-132 (TRYFIGNLASGGMAGATSLCF), 181-201 (VSVQGIIIYRAAYFGFYDTAR), and 213-233 (YVSWAIAQCVTTVAGIVSYPF). Positions 82 and 94 each coordinate ADP. Arginine 237 provides a ligand contact to ADP. Residues 237–242 (RRRMMM) form an important for transport activity region. The Nucleotide carrier signature motif signature appears at 237–242 (RRRMMM). The helical transmembrane segment at 276-293 (AFSNVLRGTGGAFVLVLY) threads the bilayer.

It belongs to the mitochondrial carrier (TC 2.A.29) family. As to quaternary structure, monomer.

It is found in the mitochondrion inner membrane. It carries out the reaction ADP(in) + ATP(out) = ADP(out) + ATP(in). The matrix-open state (m-state) is inhibited by the membrane-permeable bongkrekic acid (BKA). The cytoplasmic-open state (c-state) is inhibited by the membrane-impermeable toxic inhibitor carboxyatractyloside (CATR). ADP:ATP antiporter that mediates import of ADP into the mitochondrial matrix for ATP synthesis, and export of ATP out to fuel the cell. Cycles between the cytoplasmic-open state (c-state) and the matrix-open state (m-state): operates by the alternating access mechanism with a single substrate-binding site intermittently exposed to either the cytosolic (c-state) or matrix (m-state) side of the inner mitochondrial membrane. This Anopheles gambiae (African malaria mosquito) protein is ADP,ATP carrier protein 2.